A 331-amino-acid chain; its full sequence is MMRNVLLLCGGGSSEHEISLLSSEYLQQQLGLIENVNVLKVEIKNEGWFDQKERLVYLDIHTKSVKSDEFNESIHIDFIVPCIHGFPGETGDIQSLFELAGIPYLGCGPEASSNSFNKITSKLWYDAIGIPNTPYLFLTENNEESHQLSREAFDKWGKLFVKAARQGSSVGCYSVTKIEQLSDAIDKAFGFSHQVLVEKAVKPRELEVSAYEMNGQLHISKPGEIIAPDGAFYSYDEKYSAGSHSITEVEAKNLTEQQLATIQLCSEKVFRQMNLRHLSRIDFFLTSEGEIYLNEVNTFPGMTKISMFPKMLQHNGHKFHEFLADCIERSL.

The 207-residue stretch at 122–328 (KLWYDAIGIP…FHEFLADCIE (207 aa)) folds into the ATP-grasp domain. 152-207 (AFDKWGKLFVKAARQGSSVGCYSVTKIEQLSDAIDKAFGFSHQVLVEKAVKPRELE) contacts ATP. Asp282, Glu295, and Asn297 together coordinate Mg(2+).

The protein belongs to the D-alanine--D-alanine ligase family. Mg(2+) serves as cofactor. Mn(2+) is required as a cofactor.

The protein resides in the cytoplasm. The catalysed reaction is 2 D-alanine + ATP = D-alanyl-D-alanine + ADP + phosphate + H(+). It functions in the pathway cell wall biogenesis; peptidoglycan biosynthesis. In terms of biological role, cell wall formation. This is D-alanine--D-alanine ligase from Vibrio vulnificus (strain CMCP6).